The primary structure comprises 406 residues: O-succinylhomoserine sulfhydrylase (406 aa).

Residue lysine 219 is modified to N6-(pyridoxal phosphate)lysine.

This sequence belongs to the trans-sulfuration enzymes family. MetZ subfamily. Homotetramer. Pyridoxal 5'-phosphate serves as cofactor.

The enzyme catalyses O-succinyl-L-homoserine + hydrogen sulfide = L-homocysteine + succinate. It participates in amino-acid biosynthesis; L-methionine biosynthesis via de novo pathway; L-homocysteine from O-succinyl-L-homoserine: step 1/1. Its function is as follows. Catalyzes the formation of L-homocysteine from O-succinyl-L-homoserine (OSHS) and hydrogen sulfide. This chain is O-succinylhomoserine sulfhydrylase, found in Mycobacterium tuberculosis (strain CDC 1551 / Oshkosh).